The primary structure comprises 617 residues: Phosphatidylinositol-3,5-bisphosphate 3-phosphatase MTMR6 (617 aa).

The 101-residue stretch at 1–101 (MEHIRTTKVE…YNSLLQLSKQ (101 aa)) folds into the GRAM domain. An interaction with RAB1B region spans residues 2-141 (EHIRTTKVEQ…AEYERMGVPN (140 aa)). Phosphotyrosine is present on Tyr-108. The Myotubularin phosphatase domain occupies 124 to 499 (GWQLIDLAAE…FNFKFWRNMY (376 aa)). Asn-248, Asn-273, and Ile-274 together coordinate a 1,2-diacyl-sn-glycero-3-phospho-(1D-myo-inositol-3,5-bisphosphate). Residues Asn-248, Asn-273, and Ile-274 each coordinate a 1,2-diacyl-sn-glycero-3-phospho-(1D-myo-inositol-3-phosphate). The active-site Phosphocysteine intermediate is the Cys-336. 8 residues coordinate a 1,2-diacyl-sn-glycero-3-phospho-(1D-myo-inositol-3,5-bisphosphate): Ser-337, Asp-338, Gly-339, Trp-340, Asp-341, Arg-342, Lys-378, and Arg-382. 6 residues coordinate a 1,2-diacyl-sn-glycero-3-phospho-(1D-myo-inositol-3-phosphate): Ser-337, Asp-338, Gly-339, Trp-340, Asp-341, and Arg-342. Residue Arg-382 participates in a 1,2-diacyl-sn-glycero-3-phospho-(1D-myo-inositol-3-phosphate) binding. 3 positions are modified to phosphoserine: Ser-557, Ser-585, and Ser-607.

Belongs to the protein-tyrosine phosphatase family. Non-receptor class myotubularin subfamily. As to quaternary structure, homodimer. Heterodimer (via C-terminus) with MTMR9 (via C-terminus). Interacts with ALKBH4. Interacts with KCNN4. Interacts (via GRAM domain) with RAB1B (in GDP-bound form); the interaction regulates MTMR6 recruitment to the endoplasmic reticulum-Golgi intermediate compartment. As to expression, isoform 1: Ubiquitously expressed including in heart, brain, spleen, lung, liver, muscle, kidney and testis (at protein level). Isoform 2: Expressed in testis (at protein level).

Its subcellular location is the cytoplasm. It localises to the endoplasmic reticulum-Golgi intermediate compartment. The protein localises to the cell projection. It is found in the ruffle membrane. The protein resides in the endoplasmic reticulum. The catalysed reaction is a 1,2-diacyl-sn-glycero-3-phospho-(1D-myo-inositol-3,5-bisphosphate) + H2O = a 1,2-diacyl-sn-glycero-3-phospho-(1D-myo-inositol-5-phosphate) + phosphate. It carries out the reaction a 1,2-diacyl-sn-glycero-3-phospho-(1D-myo-inositol-3-phosphate) + H2O = a 1,2-diacyl-sn-glycero-3-phospho-(1D-myo-inositol) + phosphate. It catalyses the reaction 1,2-dioctanoyl-sn-glycero-3-phospho-(1D-myo-inositol-3,5-bisphosphate) + H2O = 1,2-dioctanoyl-sn-glycero-3-phospho-(1D-myo-inositol-5-phosphate) + phosphate. The enzyme catalyses 1,2-dioctanoyl-sn-glycero-3-phospho-(1-D-myo-inositol-3-phosphate) + H2O = 1,2-dioctanoyl-sn-glycero-3-phospho-(1D-myo-inositol) + phosphate. With respect to regulation, allosterically activated by phosphatidylserine and/or phosphatidylinositol 4-phosphate (PtdIns(4)P), and phosphatidylinositol 5-phosphate (PtdIns(5)P). Interaction with MTMR9 increases catalytic activity towards phosphatidylinositol 3,5-bisphosphate. Its function is as follows. Lipid phosphatase that specifically dephosphorylates the D-3 position of phosphatidylinositol 3-phosphate and phosphatidylinositol 3,5-bisphosphate, generating phosphatidylinositol and phosphatidylinositol 5-phosphate. Binds with high affinity to phosphatidylinositol 3,5-bisphosphate (PtdIns(3,5)P2) but also to phosphatidylinositol 3-phosphate (PtdIns(3)P), phosphatidylinositol 4-phosphate (PtdIns(4)P), and phosphatidylinositol 5-phosphate (PtdIns(5)P), phosphatidic acid and phosphatidylserine. Negatively regulates ER-Golgi protein transport. Probably in association with MTMR9, plays a role in the late stages of macropinocytosis by dephosphorylating phosphatidylinositol 3-phosphate in membrane ruffles. Acts as a negative regulator of KCNN4/KCa3.1 channel activity in CD4(+) T-cells possibly by decreasing intracellular levels of phosphatidylinositol 3-phosphate. Negatively regulates proliferation of reactivated CD4(+) T-cells. In complex with MTMR9, negatively regulates DNA damage-induced apoptosis. The formation of the MTMR6-MTMR9 complex stabilizes both MTMR6 and MTMR9 protein levels. The sequence is that of Phosphatidylinositol-3,5-bisphosphate 3-phosphatase MTMR6 from Mus musculus (Mouse).